The sequence spans 435 residues: Serine--tRNA ligase (435 aa).

237–239 (TAE) serves as a coordination point for L-serine. 268 to 270 (RSE) contributes to the ATP binding site. Glu291 contacts L-serine. Position 355 to 358 (355 to 358 (EISS)) interacts with ATP. Ser390 serves as a coordination point for L-serine.

This sequence belongs to the class-II aminoacyl-tRNA synthetase family. Type-1 seryl-tRNA synthetase subfamily. As to quaternary structure, homodimer. The tRNA molecule binds across the dimer.

It localises to the cytoplasm. It carries out the reaction tRNA(Ser) + L-serine + ATP = L-seryl-tRNA(Ser) + AMP + diphosphate + H(+). The enzyme catalyses tRNA(Sec) + L-serine + ATP = L-seryl-tRNA(Sec) + AMP + diphosphate + H(+). It functions in the pathway aminoacyl-tRNA biosynthesis; selenocysteinyl-tRNA(Sec) biosynthesis; L-seryl-tRNA(Sec) from L-serine and tRNA(Sec): step 1/1. Its function is as follows. Catalyzes the attachment of serine to tRNA(Ser). Is also able to aminoacylate tRNA(Sec) with serine, to form the misacylated tRNA L-seryl-tRNA(Sec), which will be further converted into selenocysteinyl-tRNA(Sec). The chain is Serine--tRNA ligase from Lactobacillus delbrueckii subsp. bulgaricus (strain ATCC BAA-365 / Lb-18).